Reading from the N-terminus, the 395-residue chain is Phosphoserine aminotransferase (395 aa).

At threonine 20 the chain carries Phosphothreonine. 80–81 (GT) is a binding site for pyridoxal 5'-phosphate. Serine 112 is subject to Phosphoserine. Pyridoxal 5'-phosphate-binding residues include tryptophan 113, threonine 170, aspartate 194, and glutamine 217. Lysine 218 carries the post-translational modification N6-(pyridoxal phosphate)lysine. Residue 271–272 (NT) participates in pyridoxal 5'-phosphate binding.

The protein belongs to the class-V pyridoxal-phosphate-dependent aminotransferase family. SerC subfamily. In terms of assembly, homodimer. The cofactor is pyridoxal 5'-phosphate.

The catalysed reaction is O-phospho-L-serine + 2-oxoglutarate = 3-phosphooxypyruvate + L-glutamate. It carries out the reaction 4-(phosphooxy)-L-threonine + 2-oxoglutarate = (R)-3-hydroxy-2-oxo-4-phosphooxybutanoate + L-glutamate. It participates in amino-acid biosynthesis; L-serine biosynthesis; L-serine from 3-phospho-D-glycerate: step 2/3. Its function is as follows. Phosphoserine aminotransferase (PSAT) is a pyridoxal 5'-phosphate-dependent enzyme involved in the second step of the phosphorylated pathway of serine biosynthesis. Catalyzes the reversible conversion of 3-phosphohydroxypyruvate to phosphoserine and of 3-hydroxy-2-oxo-4-phosphonooxybutanoate to phosphohydroxythreonine. Plays an indirect role in purine biosynthesis. In Saccharomyces cerevisiae (strain ATCC 204508 / S288c) (Baker's yeast), this protein is Phosphoserine aminotransferase.